A 667-amino-acid polypeptide reads, in one-letter code: Mediator of RNA polymerase II transcription subunit 17 (667 aa).

Residues 172 to 197 adopt a coiled-coil conformation; the sequence is KRRALQEAVQVLDMAQKQRQRASSNL.

It belongs to the Mediator complex subunit 17 family. In terms of assembly, component of the Mediator complex.

Its subcellular location is the nucleus. Functionally, component of the Mediator complex, a coactivator involved in regulated gene transcription of nearly all RNA polymerase II-dependent genes. Mediator functions as a bridge to convey information from gene-specific regulatory proteins to the basal RNA polymerase II transcription machinery. Mediator is recruited to promoters by direct interactions with regulatory proteins and serves as a scaffold for the assembly of a functional preinitiation complex with RNA polymerase II and the general transcription factors. This Caenorhabditis elegans protein is Mediator of RNA polymerase II transcription subunit 17 (mdt-17).